Consider the following 1290-residue polypeptide: 1-phosphatidylinositol 4,5-bisphosphate phosphodiesterase gamma-1 (1290 aa).

At Ala-2 the chain carries N-acetylalanine. The 116-residue stretch at 27–142 (RSLEVGTVMT…WIKGLTWLME (116 aa)) folds into the PH 1 domain. The region spanning 152 to 187 (QIERWLRKQFYSVDRNREDRISAKDLKNMLSQVNYR) is the EF-hand domain. Residues Asp-165, Asn-167, Glu-169, Arg-171, and Asp-176 each contribute to the Ca(2+) site. The 145-residue stretch at 320-464 (DTMNNPLSHY…LKRKILIKHK (145 aa)) folds into the PI-PLC X-box domain. Residues His-335 and His-380 contribute to the active site. The region spanning 489–523 (SIKNGILYLEDPVNHEWYPHYFVLTSSKIYYSEET) is the PH 2; first part domain. Tyr-506 bears the Phosphotyrosine mark. Residues 522-544 (ETSSDQGNEDEEEPKEVSSSTEL) are disordered. SH2 domains are found at residues 550-657 (WFHG…SEPV) and 668-756 (WYHA…RYPI). The residue at position 771 (Tyr-771) is a Phosphotyrosine; by SYK. Tyr-775 carries the post-translational modification Phosphotyrosine. Residue Tyr-783 is modified to Phosphotyrosine; by ITK, SYK and TXK. The region spanning 791 to 851 (TFKCAVKALF…PSNYVEEMVN (61 aa)) is the SH3 domain. The PH 2; second part domain occupies 895–931 (FVFSISMASVAHWSLDVAADSQEELQDWVKKIREVAQ). The PI-PLC Y-box domain maps to 953 to 1070 (LSELVVYCRP…GYVLQPSTMR (118 aa)). Tyr-977 is modified (phosphotyrosine). The region spanning 1071–1194 (DEAFDPFDKS…TGYRAVPLKN (124 aa)) is the C2 domain. 5 positions are modified to phosphoserine: Ser-1221, Pro-1222, Ser-1227, Ser-1233, and Ser-1248. A Phosphotyrosine modification is found at Tyr-1253. Ser-1263 is subject to Phosphoserine. Positions 1271 to 1290 (FDSRERRAPRRTRVNGDNRL) are disordered.

In terms of assembly, interacts with AGAP2 via its SH3 domain. Interacts (via SH2 domain) with RET. Interacts with FLT1 (tyrosine-phosphorylated). Interacts (via SH2 domain) with FGFR1, FGFR2, FGFR3 and FGFR4 (phosphorylated). Interacts with LAT (phosphorylated) upon TCR activation. Interacts (via SH3 domain) with the Pro-rich domain of TNK1. Associates with BLNK, VAV1, GRB2 and NCK1 in a B-cell antigen receptor-dependent fashion. Interacts with CBLB in activated T-cells; which inhibits phosphorylation. Interacts with SHB. Interacts (via SH3 domain) with the Arg/Gly-rich-flanked Pro-rich domains of KHDRBS1/SAM68. This interaction is selectively regulated by arginine methylation of KHDRBS1/SAM68. Interacts with INPP5D/SHIP1, THEMIS and CLNK. Interacts with AXL, FLT4 and KIT. Interacts with RALGPS1. Interacts (via the SH2 domains) with VIL1 (phosphorylated at C-terminus tyrosine phosphorylation sites). Interacts (via SH2 domain) with PDGFRA and PDGFRB (tyrosine phosphorylated). Interacts with PIP5K1C. Interacts with NTRK1 and NTRK2 (phosphorylated upon ligand-binding). Interacts with SYK; activates PLCG1. Interacts with GRB2, LAT and THEMIS upon TCR activation in thymocytes. Interacts with TESPA1; the association is increased with prolonged stimulation of the TCR and may facilitate the assembly of the LAT signalosome. Interacts (via C-terminal proline-rich domain (PRD)) with PLCG1 (via SH3 domain); this interaction leads to guanine nucleotide exchange from PlCG1 to DNM1 and enhances DNM1-dependent endocytosis. (Microbial infection) Interacts (via SH3 domain) with HEV ORF3 protein. Requires Ca(2+) as cofactor. Tyrosine phosphorylated in response to signaling via activated FLT3, KIT and PDGFRA. Tyrosine phosphorylated by activated FGFR1, FGFR2, FGFR3 and FGFR4. Tyrosine phosphorylated by activated FLT1 and KDR. Tyrosine phosphorylated by activated PDGFRB. The receptor-mediated activation of PLCG1 involves its phosphorylation by tyrosine kinases, in response to ligation of a variety of growth factor receptors and immune system receptors. For instance, SYK phosphorylates and activates PLCG1 in response to ligation of the B-cell receptor. May be dephosphorylated by PTPRJ. Phosphorylated by ITK and TXK on Tyr-783 upon TCR activation in T-cells. Post-translationally, ubiquitinated by CBLB in activated T-cells.

It localises to the cell projection. It is found in the lamellipodium. Its subcellular location is the ruffle. It catalyses the reaction a 1,2-diacyl-sn-glycero-3-phospho-(1D-myo-inositol-4,5-bisphosphate) + H2O = 1D-myo-inositol 1,4,5-trisphosphate + a 1,2-diacyl-sn-glycerol + H(+). The enzyme catalyses a 1,2-diacyl-sn-glycero-3-phospho-(1D-myo-inositol) + H2O = 1D-myo-inositol 1-phosphate + a 1,2-diacyl-sn-glycerol + H(+). Activated by phosphorylation on tyrosine residues. In terms of biological role, mediates the production of the second messenger molecules diacylglycerol (DAG) and inositol 1,4,5-trisphosphate (IP3). Plays an important role in the regulation of intracellular signaling cascades. Becomes activated in response to ligand-mediated activation of receptor-type tyrosine kinases, such as PDGFRA, PDGFRB, EGFR, FGFR1, FGFR2, FGFR3 and FGFR4. Plays a role in actin reorganization and cell migration. Guanine nucleotide exchange factor that binds the GTPase DNM1 and catalyzes the dissociation of GDP, allowing a GTP molecule to bind in its place, therefore enhancing DNM1-dependent endocytosis. This is 1-phosphatidylinositol 4,5-bisphosphate phosphodiesterase gamma-1 from Homo sapiens (Human).